The sequence spans 145 residues: Mite group 2 allergen Eur m 2 (145 aa).

Positions 1-16 (MYKILCLSLLVAAVAA) are cleaved as a signal peptide. 3 disulfides stabilise this stretch: Cys24-Cys135, Cys37-Cys43, and Cys89-Cys94.

This sequence belongs to the NPC2 family.

It localises to the secreted. In Euroglyphus maynei (Mayne's house dust mite), this protein is Mite group 2 allergen Eur m 2 (EURM2).